The sequence spans 388 residues: Carbamoyl phosphate synthase small chain (388 aa).

The CPSase stretch occupies residues 1 to 192 (MPLSDAMPAL…FNPDGTVKNG (192 aa)). L-glutamine contacts are provided by Ser-51, Gly-244, and Gly-246. The 187-residue stretch at 196–382 (TVVALDFGVK…VHQMRTTKQA (187 aa)) folds into the Glutamine amidotransferase type-1 domain. Catalysis depends on Cys-272, which acts as the Nucleophile. Met-273, Gln-276, Asn-312, and Phe-315 together coordinate L-glutamine. Residues His-355 and Glu-357 contribute to the active site.

This sequence belongs to the CarA family. Composed of two chains; the small (or glutamine) chain promotes the hydrolysis of glutamine to ammonia, which is used by the large (or ammonia) chain to synthesize carbamoyl phosphate. Tetramer of heterodimers (alpha,beta)4.

It carries out the reaction hydrogencarbonate + L-glutamine + 2 ATP + H2O = carbamoyl phosphate + L-glutamate + 2 ADP + phosphate + 2 H(+). It catalyses the reaction L-glutamine + H2O = L-glutamate + NH4(+). The protein operates within amino-acid biosynthesis; L-arginine biosynthesis; carbamoyl phosphate from bicarbonate: step 1/1. Its pathway is pyrimidine metabolism; UMP biosynthesis via de novo pathway; (S)-dihydroorotate from bicarbonate: step 1/3. Its function is as follows. Small subunit of the glutamine-dependent carbamoyl phosphate synthetase (CPSase). CPSase catalyzes the formation of carbamoyl phosphate from the ammonia moiety of glutamine, carbonate, and phosphate donated by ATP, constituting the first step of 2 biosynthetic pathways, one leading to arginine and/or urea and the other to pyrimidine nucleotides. The small subunit (glutamine amidotransferase) binds and cleaves glutamine to supply the large subunit with the substrate ammonia. This is Carbamoyl phosphate synthase small chain from Nostoc sp. (strain PCC 7120 / SAG 25.82 / UTEX 2576).